Consider the following 185-residue polypeptide: MKSGEKNYSVKEAMIFSQRIAQLSKALWKCVEKDWQQWIKPYDLNINEHHILSIAYHLKGASISEIAKFGVMHVSTAFNFSKKLEERGYLVFSKKEDDKRNTYIEITDKGEELLLRLMEEYDPENNSVFNGALELRNFYGKFPENIELIAILRNIYGQDFIDIFEKSLENIEENFTETDQKLVKK.

An HTH marR-type domain is found at 13 to 157 (AMIFSQRIAQ…LIAILRNIYG (145 aa)). The H-T-H motif DNA-binding region spans 63-86 (ISEIAKFGVMHVSTAFNFSKKLEE).

Homodimer.

Functionally, negative regulator of protease production and sporulation. In Bacillus mycoides (strain KBAB4) (Bacillus weihenstephanensis), this protein is HTH-type transcriptional regulator Hpr.